Reading from the N-terminus, the 472-residue chain is 2-amino-4-ketopentanoate thiolase beta subunit (472 aa).

At Lys-102 the chain carries N6-(pyridoxal phosphate)lysine. Residues Asn-128 and 238-242 each bind pyridoxal 5'-phosphate; that span reads AGGGN.

It belongs to the threonine synthase family. As to quaternary structure, heterodimer with OrtA. Pyridoxal 5'-phosphate serves as cofactor.

The catalysed reaction is D-alanine + acetyl-CoA = (2R)-2-amino-4-oxopentanoate + CoA. In terms of biological role, involved in the ornithine fermentation pathway. Catalyzes the thiolytic cleavage of 2-amino-4-ketopentanoate (AKP) with coenzyme A (CoA) to form acetyl-CoA and alanine. It is strictly specific for AKP. This is 2-amino-4-ketopentanoate thiolase beta subunit from Unknown prokaryotic organism.